The sequence spans 169 residues: Shikimate kinase (169 aa).

Residue 12 to 17 participates in ATP binding; the sequence is GCGKST. Position 16 (S16) interacts with Mg(2+). 3 residues coordinate substrate: D34, R57, and G79. An ATP-binding site is contributed by R116. Residue R133 participates in substrate binding.

The protein belongs to the shikimate kinase family. In terms of assembly, monomer. Mg(2+) is required as a cofactor.

Its subcellular location is the cytoplasm. The enzyme catalyses shikimate + ATP = 3-phosphoshikimate + ADP + H(+). Its pathway is metabolic intermediate biosynthesis; chorismate biosynthesis; chorismate from D-erythrose 4-phosphate and phosphoenolpyruvate: step 5/7. Catalyzes the specific phosphorylation of the 3-hydroxyl group of shikimic acid using ATP as a cosubstrate. The polypeptide is Shikimate kinase (Clostridium beijerinckii (strain ATCC 51743 / NCIMB 8052) (Clostridium acetobutylicum)).